Consider the following 437-residue polypeptide: Regulator of phospholipase D SRF1 (437 aa).

Residues 1–24 (MGDSNSSQEAYSDTTSTNASRIAD) are disordered. Over 1–267 (MGDSNSSQEA…LTSLLLDNQY (267 aa)) the chain is Cytoplasmic. A phosphoserine mark is found at Ser45 and Ser167. The helical transmembrane segment at 268 to 288 (LILGLRIFTGILSCISLALAI) threads the bilayer. Residues 289-308 (KIFQNSRSNNTISESKIGQQ) are Extracellular-facing. Asn297 carries an N-linked (GlcNAc...) asparagine glycan. The chain crosses the membrane as a helical span at residues 309–329 (PSTIMAICVNAVAIAYIIYIA). The Cytoplasmic portion of the chain corresponds to 330–348 (HDEFAGKPVGLRNPLSKLK). A helical transmembrane segment spans residues 349-369 (LILLDLLFIIFSSANLALAFN). The Extracellular portion of the chain corresponds to 370–403 (TRFDKEWVCTSIRRSNGSTYGYPKIPRICRKQEA). Residue Asn385 is glycosylated (N-linked (GlcNAc...) asparagine). A helical transmembrane segment spans residues 404–424 (LSAFLFVALFMWVITFSISIV). Topologically, residues 425–437 (RVVEKVSSITNRN) are cytoplasmic.

As to quaternary structure, interacts with SPO14.

The protein localises to the membrane. In terms of biological role, regulator of phospholipase D (SPO14) which is required for SPO14 catalytic activity in mitotic cells. Essential to buffer the toxic effects of C16:0 platelet activating factor. This Saccharomyces cerevisiae (strain ATCC 204508 / S288c) (Baker's yeast) protein is Regulator of phospholipase D SRF1 (SRF1).